Consider the following 1011-residue polypeptide: CRM-domain containing factor CFM2, chloroplastic (1011 aa).

The transit peptide at 1 to 45 (MLLPLFHQQPLILAKTFPDRIFPPFLVPNTLVSRRNVSRANSGIF) directs the protein to the chloroplast. The span at 77-90 (HDSPTRRITGEESG) shows a compositional bias: basic and acidic residues. The tract at residues 77–96 (HDSPTRRITGEESGKNSPGE) is disordered. CRM domains are found at residues 164–260 (LTLP…YFVS), 376–473 (PKLT…AVSS), and 577–677 (EGIT…QCLR). Disordered stretches follow at residues 721–810 (DSAT…GNSL) and 841–872 (LNAN…DGLV). Residues 722-736 (SATNETWSDGESSNM) are compositionally biased toward polar residues. The span at 743–757 (ENQHTEPEKAREKIE) shows a compositional bias: basic and acidic residues. The span at 762–771 (SDLSVPSSGE) shows a compositional bias: polar residues. Acidic residues predominate over residues 772-782 (ENWEDDSEGEV). Polar residues predominate over residues 849–859 (GSSTGSGSQIS). In terms of domain architecture, CRM 4 spans 873–972 (TDLSNRERLI…WGAEEEMKSF (100 aa)).

In terms of assembly, interacts with RNA. Part of large ribonucleo-protein particles that contain CAF1 and/or CAF2.

The protein localises to the plastid. It is found in the chloroplast stroma. Functionally, binds specific group II introns in chloroplasts and facilitates their splicing. Acts on both subgroup IIA and subgroup IIB introns. The substrates of the subgroup IIB also require the CRM domain proteins CAF1 or CAF2, with a simultaneous binding of CFM2 and CAF1 or CAF2. Can bind to and promote the splicing of the single group I intron in chloroplast tRNA transcript of trnL-UAA gene. The chain is CRM-domain containing factor CFM2, chloroplastic from Arabidopsis thaliana (Mouse-ear cress).